Here is a 432-residue protein sequence, read N- to C-terminus: Guanine/hypoxanthine permease PbuO (432 aa).

10 consecutive transmembrane segments (helical) span residues 15-35 (IIAG…NPVI), 51-71 (IIAS…PIAI), 92-112 (GITY…FIIL), 133-153 (ITTG…GIVA), 174-194 (LVGL…ALFI), 196-216 (MAAT…KGFM), 234-254 (FGDV…LVTI), 340-360 (ALSG…SLMM), 379-399 (LVIL…LGFI), and 412-432 (REIH…LFIL).

The protein belongs to the nucleobase:cation symporter-2 (NCS2) (TC 2.A.40) family. Azg-like subfamily.

The protein localises to the cell membrane. Functionally, involved in the uptake of the purine bases hypoxanthine and guanine. May work at purine concentrations higher than 100 uM. The protein is Guanine/hypoxanthine permease PbuO (pbuO) of Bacillus subtilis (strain 168).